Here is a 423-residue protein sequence, read N- to C-terminus: UPF0229 protein Psyr_4632 (423 aa).

The tract at residues 65-110 (HHGRGGKQTVVHPGNKEFTTGEHIARPQGGGGGKGPGKAGNSGEGM) is disordered. The span at 92-107 (QGGGGGKGPGKAGNSG) shows a compositional bias: gly residues.

Belongs to the UPF0229 family.

This is UPF0229 protein Psyr_4632 from Pseudomonas syringae pv. syringae (strain B728a).